The primary structure comprises 130 residues: Histone H2A type 1-B/E (130 aa).

The interval Met1–Ala22 is disordered. N-acetylserine is present on Ser2. Position 2 is a phosphoserine; by RPS6KA5 (Ser2). Arg4 bears the Citrulline; alternate mark. The residue at position 4 (Arg4) is a Symmetric dimethylarginine; by PRMT5; alternate. 2 positions are modified to N6-(2-hydroxyisobutyryl)lysine; alternate: Lys6 and Lys10. Lys6 bears the N6-acetyllysine; alternate mark. Over residues Gln7 to Ser19 the composition is skewed to basic residues. Residues Lys10 and Lys14 each carry the N6-(beta-hydroxybutyryl)lysine; alternate modification. At Lys10 the chain carries N6-lactoyllysine; alternate. Position 10 is an N6-succinyllysine; alternate (Lys10). A Glycyl lysine isopeptide (Lys-Gly) (interchain with G-Cter in ubiquitin); alternate cross-link involves residue Lys14. Lys16 participates in a covalent cross-link: Glycyl lysine isopeptide (Lys-Gly) (interchain with G-Cter in ubiquitin). Lys37 bears the N6-(2-hydroxyisobutyryl)lysine; alternate mark. Lys37 bears the N6-(beta-hydroxybutyryl)lysine; alternate mark. Position 37 is an N6-crotonyllysine; alternate (Lys37). An N6-(2-hydroxyisobutyryl)lysine mark is found at Lys75 and Lys76. The residue at position 96 (Lys96) is an N6-(2-hydroxyisobutyryl)lysine; alternate. Residue Lys96 is modified to N6-(beta-hydroxybutyryl)lysine; alternate. Lys96 is modified (N6-succinyllysine; alternate). Lys96 carries the post-translational modification N6-glutaryllysine; alternate. Gln105 is subject to N5-methylglutamine. The residue at position 119 (Lys119) is an N6-(2-hydroxyisobutyryl)lysine; alternate. Lys119 carries the N6-(beta-hydroxybutyryl)lysine; alternate modification. N6-crotonyllysine; alternate occurs at positions 119 and 120. Residues Lys119 and Lys120 each carry the N6-glutaryllysine; alternate modification. A Glycyl lysine isopeptide (Lys-Gly) (interchain with G-Cter in ubiquitin); alternate cross-link involves residue Lys120. Position 121 is a phosphothreonine; by DCAF1 (Thr121). Lys126 is modified (N6-crotonyllysine; alternate). Lys126 carries the post-translational modification N6-glutaryllysine; alternate.

It belongs to the histone H2A family. In terms of assembly, the nucleosome is a histone octamer containing two molecules each of H2A, H2B, H3 and H4 assembled in one H3-H4 heterotetramer and two H2A-H2B heterodimers. The octamer wraps approximately 147 bp of DNA. Post-translationally, deiminated on Arg-4 in granulocytes upon calcium entry. In terms of processing, monoubiquitination of Lys-120 (H2AK119Ub) by RING1, TRIM37 and RNF2/RING2 complex gives a specific tag for epigenetic transcriptional repression and participates in X chromosome inactivation of female mammals. It is involved in the initiation of both imprinted and random X inactivation. Ubiquitinated H2A is enriched in inactive X chromosome chromatin. Ubiquitination of H2A functions downstream of methylation of 'Lys-27' of histone H3 (H3K27me). H2AK119Ub by RNF2/RING2 can also be induced by ultraviolet and may be involved in DNA repair. Monoubiquitination of Lys-120 (H2AK119Ub) by TRIM37 may promote transformation of cells in a number of breast cancers. Following DNA double-strand breaks (DSBs), it is ubiquitinated through 'Lys-63' linkage of ubiquitin moieties by the E2 ligase UBE2N and the E3 ligases RNF8 and RNF168, leading to the recruitment of repair proteins to sites of DNA damage. Ubiquitination at Lys-14 and Lys-16 (H2AK13Ub and H2AK15Ub, respectively) in response to DNA damage is initiated by RNF168 that mediates monoubiquitination at these 2 sites, and 'Lys-63'-linked ubiquitin are then conjugated to monoubiquitin; RNF8 is able to extend 'Lys-63'-linked ubiquitin chains in vitro. Deubiquitinated by USP51 at Lys-14 and Lys-16 (H2AK13Ub and H2AK15Ub, respectively) after damaged DNA is repaired. H2AK119Ub and ionizing radiation-induced 'Lys-63'-linked ubiquitination (H2AK13Ub and H2AK15Ub) are distinct events. Phosphorylation on Ser-2 (H2AS1ph) is enhanced during mitosis. Phosphorylation on Ser-2 by RPS6KA5/MSK1 directly represses transcription. Acetylation of H3 inhibits Ser-2 phosphorylation by RPS6KA5/MSK1. Phosphorylation at Thr-121 (H2AT120ph) by DCAF1 is present in the regulatory region of many tumor suppresor genes and down-regulates their transcription. Post-translationally, glutamine methylation at Gln-105 (H2AQ104me) by FBL is specifically dedicated to polymerase I. It is present at 35S ribosomal DNA locus and impairs binding of the FACT complex. In terms of processing, symmetric dimethylation on Arg-4 by the PRDM1/PRMT5 complex may play a crucial role in the germ-cell lineage. Crotonylation (Kcr) is specifically present in male germ cells and marks testis-specific genes in post-meiotic cells, including X-linked genes that escape sex chromosome inactivation in haploid cells. Crotonylation marks active promoters and enhancers and confers resistance to transcriptional repressors. It is also associated with post-meiotically activated genes on autosomes. Post-translationally, lactylated in macrophages by EP300/P300 by using lactoyl-CoA directly derived from endogenous or exogenous lactate, leading to stimulates gene transcription.

It localises to the nucleus. It is found in the chromosome. Functionally, core component of nucleosome. Nucleosomes wrap and compact DNA into chromatin, limiting DNA accessibility to the cellular machineries which require DNA as a template. Histones thereby play a central role in transcription regulation, DNA repair, DNA replication and chromosomal stability. DNA accessibility is regulated via a complex set of post-translational modifications of histones, also called histone code, and nucleosome remodeling. The polypeptide is Histone H2A type 1-B/E (Homo sapiens (Human)).